We begin with the raw amino-acid sequence, 377 residues long: uncharacterized protein (377 aa).

Composition is skewed to polar residues over residues 1–11 and 31–43; these read MSSIQGTSGSS and PSGQ…AVGK. Disordered regions lie at residues 1–43, 109–141, and 328–377; these read MSSI…AVGK, SSEE…IARN, and SSSP…RGFQ. Over residues 334–345 the composition is skewed to basic and acidic residues; that stretch reads EDPRSLRDRLRD.

It belongs to the chlamydial CPn_0499/CT_392/TC_0671 family.

This is an uncharacterized protein from Chlamydia trachomatis serovar D (strain ATCC VR-885 / DSM 19411 / UW-3/Cx).